The sequence spans 246 residues: Probable phosphatase PBPRB2022 (246 aa).

Residues His-8, His-10, His-16, His-41, Glu-74, His-102, His-132, Asp-193, and His-195 each coordinate Zn(2+).

The protein belongs to the PHP family. Zn(2+) is required as a cofactor.

The polypeptide is Probable phosphatase PBPRB2022 (Photobacterium profundum (strain SS9)).